The chain runs to 284 residues: NAD kinase (284 aa).

Residue aspartate 70 is the Proton acceptor of the active site. NAD(+)-binding positions include aspartate 70–glycine 71, asparagine 139–glutamate 140, lysine 167, aspartate 169, leucine 177, threonine 180–serine 185, and glutamine 236.

Belongs to the NAD kinase family. The cofactor is a divalent metal cation.

The protein localises to the cytoplasm. The catalysed reaction is NAD(+) + ATP = ADP + NADP(+) + H(+). Involved in the regulation of the intracellular balance of NAD and NADP, and is a key enzyme in the biosynthesis of NADP. Catalyzes specifically the phosphorylation on 2'-hydroxyl of the adenosine moiety of NAD to yield NADP. This chain is NAD kinase, found in Helicobacter pylori (strain Shi470).